Consider the following 194-residue polypeptide: Large ribosomal subunit protein bL17 (194 aa).

The segment at alanine 126–glutamate 194 is disordered. The segment covering threonine 131–glycine 140 has biased composition (basic residues). 2 stretches are compositionally biased toward polar residues: residues alanine 144–alanine 161 and leucine 181–glutamate 194.

This sequence belongs to the bacterial ribosomal protein bL17 family. As to quaternary structure, part of the 50S ribosomal subunit. Contacts protein L32.

In Amoebophilus asiaticus (strain 5a2), this protein is Large ribosomal subunit protein bL17.